We begin with the raw amino-acid sequence, 570 residues long: Small ribosomal subunit protein uS2c (570 aa).

Residues 1–306 (MLNKKPPYLI…IKLNPLSTPQ (306 aa)) are N-terminal extension. TRAM domains are found at residues 28 to 89 (KLIP…KLIK) and 104 to 169 (ALTP…VATV).

It belongs to the universal ribosomal protein uS2 family.

It localises to the plastid. It is found in the chloroplast. This chain is Small ribosomal subunit protein uS2c (rps2-1), found in Chlamydomonas reinhardtii (Chlamydomonas smithii).